The following is a 211-amino-acid chain: Peroxiredoxin (211 aa).

Residues 2-156 (PLLGDDFPEL…ILRAVKVLQI (155 aa)) form the Thioredoxin domain. The active-site Cysteine sulfenic acid (-SOH) intermediate is C44. R119 serves as a coordination point for substrate. A disulfide bridge connects residues C199 and C205.

The protein belongs to the peroxiredoxin family. Prx6 subfamily. In terms of assembly, homodecamer. Pentamer of dimers that assemble into a ring structure.

It localises to the cytoplasm. It carries out the reaction a hydroperoxide + [thioredoxin]-dithiol = an alcohol + [thioredoxin]-disulfide + H2O. Thiol-specific peroxidase that catalyzes the reduction of hydrogen peroxide and organic hydroperoxides to water and alcohols, respectively. Plays a role in cell protection against oxidative stress by detoxifying peroxides. The protein is Peroxiredoxin of Chlorobaculum tepidum (strain ATCC 49652 / DSM 12025 / NBRC 103806 / TLS) (Chlorobium tepidum).